The following is a 748-amino-acid chain: Long-chain-alcohol oxidase FAO4B (748 aa).

The segment covering 1 to 18 has biased composition (basic residues); sequence MEDVRRRNRGHPLLRSKK. The tract at residues 1–25 is disordered; it reads MEDVRRRNRGHPLLRSKKRGEGYNH. 2 consecutive transmembrane segments (helical) span residues 89–109 and 140–160; these read IILM…SLCL and FLLP…FYFF. An FAD-binding site is contributed by 238–253; sequence CDAVVVGSGSGGGVAA. His-679 serves as the catalytic Proton acceptor.

This sequence belongs to the GMC oxidoreductase family.

It is found in the membrane. It carries out the reaction a long-chain primary fatty alcohol + O2 = a long-chain fatty aldehyde + H2O2. Functionally, long-chain fatty alcohol oxidase involved in the omega-oxidation pathway of lipid degradation. This chain is Long-chain-alcohol oxidase FAO4B (FAO4B), found in Arabidopsis thaliana (Mouse-ear cress).